The chain runs to 103 residues: Large ribosomal subunit protein bL21 (103 aa).

The protein belongs to the bacterial ribosomal protein bL21 family. In terms of assembly, part of the 50S ribosomal subunit. Contacts protein L20.

This protein binds to 23S rRNA in the presence of protein L20. The protein is Large ribosomal subunit protein bL21 of Azotobacter vinelandii (strain DJ / ATCC BAA-1303).